Consider the following 179-residue polypeptide: UPF0316 protein Ping_1367 (179 aa).

Helical transmembrane passes span 28–48 (FLAS…SAQV) and 55–75 (WYLA…GISI).

It belongs to the UPF0316 family.

Its subcellular location is the cell membrane. The protein is UPF0316 protein Ping_1367 of Psychromonas ingrahamii (strain DSM 17664 / CCUG 51855 / 37).